The sequence spans 467 residues: Neurexin-1-beta (467 aa).

A signal peptide spans 1 to 45 (MYQRMLRCGAELGSPGGGGGGAGGRLALLWIVPLTLSGLLGVAWG). Over 46-391 (ASSLGAHHIH…EVIRESSSTT (346 aa)) the chain is Extracellular. One can recognise a Laminin G-like domain in the interval 86 to 284 (YIFSKGGGQI…DANIAIVGNV (199 aa)). Residues Asp136 and Val153 each contribute to the Ca(2+) site. Asn183 carries N-linked (GlcNAc...) asparagine glycosylation. Residues 200 to 229 (GNNDNERLAIARQRIPYRLGRVVDEWLLDK) form an essential for interaction with CBLN1; modulates interaction affinity with NLGN1, NLGN2 and NLGN3; prevents interaction with DAG1/alpha-dystroglycan; modulates interaction with alpha-latrotoxin region. Ca(2+) is bound by residues Ile235 and Asn237. The segment at 318 to 380 (LATSTARRGN…AGGREPYPGS (63 aa)) is disordered. Over residues 324-339 (RRGNSPTKEPVSQTTD) the composition is skewed to polar residues. An O-linked (Xyl...) (heparan sulfate) serine glycan is attached at Ser345. A helical transmembrane segment spans residues 392–412 (GMVVGIVAAAALCILILLYAM). Over 413 to 467 (YKYRNRDEGSYHVDESRNYISNSAQSNGAVVKEKQPSSAKSANKNKKNKDKEYYV) the chain is Cytoplasmic. The interval 434–467 (NSAQSNGAVVKEKQPSSAKSANKNKKNKDKEYYV) is disordered. A phosphoserine mark is found at Ser449, Ser450, and Ser453.

It belongs to the neurexin family. In terms of assembly, the cytoplasmic C-terminal region binds to CASK. Binds NLGN1, NLGN2 and NLGN3, DAG1 (alpha-dystroglycan) and alpha-latrotoxin. Binding to neuroligins is calcium-dependent, and the binding preference ranks as follow: NLGN1 &gt; NLGN4 &gt;&gt; NLGN3 &gt; NLGN2. Interacts with CBLN2 and more weakly with CBLN4. Interacts with CBLN1; interaction is CBLN1 hexamer form-dependent; CBLN1-binding is calcium-independent; isoform 1b does not interact with CBLN1. Interacts with CLSTN3. O-glycosylated; contains heparan sulfate. Heparan sulfate attachment is required for synapse development by mediating interactions with neuroligins.

It is found in the presynaptic cell membrane. Functionally, neuronal cell surface protein involved in cell recognition and cell adhesion by forming intracellular junctions through binding to neuroligins. Plays a role in formation of synaptic junctions. Functions as part of a trans-synaptic complex by binding to cerebellins and postsynaptic GRID1. This interaction helps regulate the activity of NMDA and AMPA receptors at hippocampal synapses without affecting synapse formation. NRXN1B-CBLN2-GRID1 complex transduce presynaptic signals into postsynaptic NMDAR response. This Bos taurus (Bovine) protein is Neurexin-1-beta.